We begin with the raw amino-acid sequence, 497 residues long: Signal recognition particle subunit SRP54 1 (497 aa).

Positions 1 to 295 (MVLAQLGGSI…DVKPFVSRLL (295 aa)) are G-domain. Residues 108–115 (GLQGSGKT), 190–194 (DTSGR), and 248–251 (TKLD) contribute to the GTP site. The M-domain stretch occupies residues 296–497 (GMGDLSGLMD…MLGGMGLGGD (202 aa)).

It belongs to the GTP-binding SRP family. SRP54 subfamily. Component of a signal recognition particle (SRP) complex that consists of a 7SL RNA molecule of 300 nucleotides and six protein subunits: SRP72, SRP68, SRP54, SRP19, SRP14 and SRP9.

It is found in the cytoplasm. The protein resides in the endoplasmic reticulum. The catalysed reaction is GTP + H2O = GDP + phosphate + H(+). Its function is as follows. Component of the signal recognition particle (SRP) complex, a ribonucleoprotein complex that mediates the cotranslational targeting of secretory and membrane proteins to the endoplasmic reticulum (ER). As part of the SRP complex, associates with the SRP receptor (SR) component SRPRA to target secretory proteins to the endoplasmic reticulum membrane. Binds to the signal sequence of presecretory proteins when they emerge from the ribosomes. Displays basal GTPase activity, and stimulates reciprocal GTPase activation of the SR subunit SRPRA. Forms a guanosine 5'-triphosphate (GTP)-dependent complex with the SR subunit SRPRA. SR compaction and GTPase mediated rearrangement of SR drive SRP-mediated cotranslational protein translocation into the ER. Requires the presence of SRP9/SRP14 and/or SRP19 to stably interact with RNA. The polypeptide is Signal recognition particle subunit SRP54 1 (SRP54-1) (Hordeum vulgare (Barley)).